Reading from the N-terminus, the 315-residue chain is ADP/ATP translocase 4 (315 aa).

Residues 1–19 (MHREPAKKKAEKRLFDASS) are Mitochondrial intermembrane-facing. The Solcar 1 repeat unit spans residues 18–110 (SSFGKDLLAG…FAFKDKYKQL (93 aa)). Residues 20 to 49 (FGKDLLAGGVAAAVSKTAVAPIERVKLLLQ) form a helical membrane-spanning segment. At 50 to 86 (VQASSKQISPEARYKGMVDCLVRIPREQGFFSFWRGN) the chain is on the mitochondrial matrix side. The chain crosses the membrane as a helical span at residues 87-111 (LANVIRYFPTQALNFAFKDKYKQLF). ADP is bound by residues Arg92 and Lys104. The Mitochondrial intermembrane portion of the chain corresponds to 112 to 121 (MSGVNKEKQF). The helical transmembrane segment at 122 to 142 (WRWFLANLASGGAAGATSLCV) threads the bilayer. Solcar repeat units lie at residues 123–213 (RWFL…VKGL) and 220–307 (TPFL…IKEF). Over 143-190 (VYPLDFARTRLGVDIGKGPEERQFKGLGDCIMKIAKSDGIAGLYQGFG) the chain is Mitochondrial matrix. Residues 191–211 (VSVQGIIVYRASYFGAYDTVK) form a helical membrane-spanning segment. Over 212-222 (GLLPKPKKTPF) the chain is Mitochondrial intermembrane. Residues 223–243 (LVSFFIAQVVTTCSGILSYPF) traverse the membrane as a helical segment. Topologically, residues 244–283 (DTVRRRMMMQSGEAKRQYKGTLDCFVKIYQHEGISSFFRG) are mitochondrial matrix. An ADP-binding site is contributed by Arg247. The important for transport activity stretch occupies residues 247–252 (RRRMMM). Positions 247-252 (RRRMMM) match the Nucleotide carrier signature motif motif. Residues 284–301 (AFSNVLRGTGGALVLVLY) form a helical membrane-spanning segment. The Mitochondrial intermembrane segment spans residues 302–315 (DKIKEFFHIDIGGR).

The protein belongs to the mitochondrial carrier (TC 2.A.29) family. As to quaternary structure, monomer. In terms of tissue distribution, expressed in brain, liver, sperm and testis. In testis, expressed at higher level in spermatocytes, while it is expressed at lower level in spermatogonial cells. Expressed in erythrocytes (at protein level).

Its subcellular location is the mitochondrion inner membrane. It localises to the membrane. The protein localises to the cell projection. The protein resides in the cilium. It is found in the flagellum membrane. The catalysed reaction is ADP(in) + ATP(out) = ADP(out) + ATP(in). It carries out the reaction dATP(out) + ADP(in) = dATP(in) + ADP(out). The enzyme catalyses dADP(in) + ADP(out) = dADP(out) + ADP(in). It catalyses the reaction H(+)(in) = H(+)(out). Its activity is regulated as follows. The matrix-open state (m-state) is inhibited by the membrane-permeable bongkrekic acid (BKA). The cytoplasmic-open state (c-state) is inhibited by the membrane-impermeable toxic inhibitor carboxyatractyloside (CATR). Proton transporter activity is inhibited by ADP:ATP antiporter activity. ADP:ATP antiporter that mediates import of ADP into the mitochondrial matrix for ATP synthesis, and export of ATP out to fuel the cell. Cycles between the cytoplasmic-open state (c-state) and the matrix-open state (m-state): operates by the alternating access mechanism with a single substrate-binding site intermittently exposed to either the cytosolic (c-state) or matrix (m-state) side of the inner mitochondrial membrane. Specifically required during spermatogenesis, probably to mediate ADP:ATP exchange in spermatocytes. Large ATP supplies from mitochondria may be critical for normal progression of spermatogenesis during early stages of meiotic prophase I, including DNA double-strand break repair and chromosomal synapsis. In addition to its ADP:ATP antiporter activity, also involved in mitochondrial uncoupling and mitochondrial permeability transition pore (mPTP) activity. Plays a role in mitochondrial uncoupling by acting as a proton transporter: proton transport uncouples the proton flows via the electron transport chain and ATP synthase to reduce the efficiency of ATP production and cause mitochondrial thermogenesis. Proton transporter activity is inhibited by ADP:ATP antiporter activity, suggesting that SLC25A31/ANT4 acts as a master regulator of mitochondrial energy output by maintaining a delicate balance between ATP production (ADP:ATP antiporter activity) and thermogenesis (proton transporter activity). Proton transporter activity requires free fatty acids as cofactor, but does not transport it. Among nucleotides, may also exchange ADP for dATP and dADP. Also plays a key role in mPTP opening, a non-specific pore that enables free passage of the mitochondrial membranes to solutes of up to 1.5 kDa, and which contributes to cell death. It is however unclear if SLC25A31/ANT4 constitutes a pore-forming component of mPTP or regulates it. The protein is ADP/ATP translocase 4 of Homo sapiens (Human).